Consider the following 177-residue polypeptide: MLDIIILILLLMGTLLGLKRGFILQFIRLTSFILSIAFAALFYKNVAPHLHWIPAPDFSAGQPALSFFTGNLEAAYYNAIAFIVLFIIAKILLRIIGSFLSIVAGIPVIKQINQMLGAVLGFLEVYLFTFVLLYVASVLPVDALQQMMGQSSLANVIINHTPYLSGLLQELWTQYGA.

4 helical membrane-spanning segments follow: residues 4–24 (IIILILLLMGTLLGLKRGFIL), 33–53 (ILSIAFAALFYKNVAPHLHWI), 80–100 (IAFIVLFIIAKILLRIIGSFL), and 115–135 (MLGAVLGFLEVYLFTFVLLYV).

The protein localises to the cell membrane. This is an uncharacterized protein from Bacillus subtilis (strain 168).